The sequence spans 67 residues: Islet amyloid polypeptide (67 aa).

A signal peptide spans 1 to 22 (MCILKLPIVLLVLSVAVNHLQA). The propeptide occupies 23–31 (SPVESHQVE). Cysteines 35 and 40 form a disulfide.

This sequence belongs to the calcitonin family. As to quaternary structure, can form homodimers. Interacts with IDE and INS. Interaction with INS inhibits homodimerization and fibril formation.

It is found in the secreted. In terms of biological role, amylin/IAPP is a glucoregulatory peptide hormone that plays an important role in the regulation of energy homeostasis. Selectively inhibits insulin-stimulated glucose utilization and glycogen deposition in muscle, while not affecting adipocyte glucose metabolism. IAPP function is mediated by the CALCR-RAMPs (AMYRs) receptor complexes. Amylin can also bind CALCR receptor in the absence of RAMPs, although it is more selective for AMYRs. This Oryctolagus cuniculus (Rabbit) protein is Islet amyloid polypeptide (IAPP).